The chain runs to 193 residues: Putative manganese efflux pump MntP (193 aa).

6 consecutive transmembrane segments (helical) span residues 6-26, 41-61, 65-85, 107-127, 132-152, and 169-189; these read LLGLAVALAMDAFAVAIAVGI, YHFGLFQALMPIIGWALGTGI, TQSYAHWIAFTLLALVGANMI, LIILSLATSIDALAVGLSLSM, IWYPALIIGLVAGAFTLFGML, and VLGGIILWAIGLNILYDNGVF.

The protein belongs to the MntP (TC 9.B.29) family.

It localises to the cell inner membrane. Probably functions as a manganese efflux pump. The sequence is that of Putative manganese efflux pump MntP from Desulfotalea psychrophila (strain LSv54 / DSM 12343).